We begin with the raw amino-acid sequence, 380 residues long: UDP-N-acetylglucosamine--N-acetylmuramyl-(pentapeptide) pyrophosphoryl-undecaprenol N-acetylglucosamine transferase (380 aa).

Residues 23–25, Asn137, Arg178, Ser210, Ile266, and Gln311 each bind UDP-N-acetyl-alpha-D-glucosamine; that span reads TGG.

This sequence belongs to the glycosyltransferase 28 family. MurG subfamily.

It localises to the cell inner membrane. The enzyme catalyses di-trans,octa-cis-undecaprenyl diphospho-N-acetyl-alpha-D-muramoyl-L-alanyl-D-glutamyl-meso-2,6-diaminopimeloyl-D-alanyl-D-alanine + UDP-N-acetyl-alpha-D-glucosamine = di-trans,octa-cis-undecaprenyl diphospho-[N-acetyl-alpha-D-glucosaminyl-(1-&gt;4)]-N-acetyl-alpha-D-muramoyl-L-alanyl-D-glutamyl-meso-2,6-diaminopimeloyl-D-alanyl-D-alanine + UDP + H(+). It functions in the pathway cell wall biogenesis; peptidoglycan biosynthesis. In terms of biological role, cell wall formation. Catalyzes the transfer of a GlcNAc subunit on undecaprenyl-pyrophosphoryl-MurNAc-pentapeptide (lipid intermediate I) to form undecaprenyl-pyrophosphoryl-MurNAc-(pentapeptide)GlcNAc (lipid intermediate II). The protein is UDP-N-acetylglucosamine--N-acetylmuramyl-(pentapeptide) pyrophosphoryl-undecaprenol N-acetylglucosamine transferase of Bacteroides fragilis (strain ATCC 25285 / DSM 2151 / CCUG 4856 / JCM 11019 / LMG 10263 / NCTC 9343 / Onslow / VPI 2553 / EN-2).